We begin with the raw amino-acid sequence, 227 residues long: RNA pyrophosphohydrolase (227 aa).

Residues 6 to 149 (GFRPNVGIIL…KRDVYQMALT (144 aa)) enclose the Nudix hydrolase domain. A Nudix box motif is present at residues 38-59 (GGIKYGETPEQAMYRELHEEIG). A disordered region spans residues 165–227 (PYGTHGAHGA…PVSTTRSTDD (63 aa)). Low complexity predominate over residues 192-201 (AQAAQQADAD). The span at 217-227 (TPVSTTRSTDD) shows a compositional bias: polar residues.

It belongs to the Nudix hydrolase family. RppH subfamily. The cofactor is a divalent metal cation.

Its function is as follows. Accelerates the degradation of transcripts by removing pyrophosphate from the 5'-end of triphosphorylated RNA, leading to a more labile monophosphorylated state that can stimulate subsequent ribonuclease cleavage. In Cupriavidus taiwanensis (strain DSM 17343 / BCRC 17206 / CCUG 44338 / CIP 107171 / LMG 19424 / R1) (Ralstonia taiwanensis (strain LMG 19424)), this protein is RNA pyrophosphohydrolase.